The following is a 315-amino-acid chain: Porphobilinogen deaminase (315 aa).

Position 241 is an S-(dipyrrolylmethanemethyl)cysteine (Cys241).

This sequence belongs to the HMBS family. As to quaternary structure, monomer. Dipyrromethane is required as a cofactor.

It catalyses the reaction 4 porphobilinogen + H2O = hydroxymethylbilane + 4 NH4(+). The protein operates within porphyrin-containing compound metabolism; protoporphyrin-IX biosynthesis; coproporphyrinogen-III from 5-aminolevulinate: step 2/4. In terms of biological role, tetrapolymerization of the monopyrrole PBG into the hydroxymethylbilane pre-uroporphyrinogen in several discrete steps. In Nitratidesulfovibrio vulgaris (strain DP4) (Desulfovibrio vulgaris), this protein is Porphobilinogen deaminase.